Reading from the N-terminus, the 187-residue chain is UPF0301 protein KPK_0728 (187 aa).

This sequence belongs to the UPF0301 (AlgH) family.

The chain is UPF0301 protein KPK_0728 from Klebsiella pneumoniae (strain 342).